The chain runs to 273 residues: Ribosomal RNA small subunit methyltransferase A (273 aa).

6 residues coordinate S-adenosyl-L-methionine: N19, L21, G46, E67, D92, and N113.

The protein belongs to the class I-like SAM-binding methyltransferase superfamily. rRNA adenine N(6)-methyltransferase family. RsmA subfamily.

Its subcellular location is the cytoplasm. It catalyses the reaction adenosine(1518)/adenosine(1519) in 16S rRNA + 4 S-adenosyl-L-methionine = N(6)-dimethyladenosine(1518)/N(6)-dimethyladenosine(1519) in 16S rRNA + 4 S-adenosyl-L-homocysteine + 4 H(+). Its function is as follows. Specifically dimethylates two adjacent adenosines (A1518 and A1519) in the loop of a conserved hairpin near the 3'-end of 16S rRNA in the 30S particle. May play a critical role in biogenesis of 30S subunits. The protein is Ribosomal RNA small subunit methyltransferase A of Hahella chejuensis (strain KCTC 2396).